The primary structure comprises 525 residues: Coronin-2A (525 aa).

WD repeat units follow at residues 24–71, 72–122, 123–170, 171–214, 215–259, 260–305, and 306–342; these read NCYD…TGKL, DPHY…RNLT, AYRK…SVIT, SPMS…AGTV, LQEA…DNLS, VPLM…ADKP, and HLSY…RFYK. The stretch at 485–524 forms a coiled coil; that stretch reads QMFYRQQEEIRRLRELLTQREVQAKQLELEIKNLRMGSEQ.

Belongs to the WD repeat coronin family. As to quaternary structure, binds actin. Component of the N-Cor repressor complex, at least composed of NCOR1, NCOR2, HDAC3, TBL1X, TBL1R, CORO2A and GPS2.

This is Coronin-2A (CORO2A) from Homo sapiens (Human).